We begin with the raw amino-acid sequence, 242 residues long: ATP synthase subunit a (242 aa).

Transmembrane regions (helical) follow at residues 29–49 (SAAYMLLASVLALTYFYLAFS), 84–104 (FVPVIFTLFVFILFCNLFGMI), 114–134 (IIITFALAILVFLMVTIVGFV), 140–160 (FLSLFLPHGTPLWLAPLMIII), 189–209 (VIASFVVTLMIYLKFLPIPLM), and 210–230 (VILIGFEIFVAILQAYIFTIL).

The protein belongs to the ATPase A chain family. F-type ATPases have 2 components, CF(1) - the catalytic core - and CF(0) - the membrane proton channel. CF(1) has five subunits: alpha(3), beta(3), gamma(1), delta(1), epsilon(1). CF(0) has three main subunits: a(1), b(2) and c(9-12). The alpha and beta chains form an alternating ring which encloses part of the gamma chain. CF(1) is attached to CF(0) by a central stalk formed by the gamma and epsilon chains, while a peripheral stalk is formed by the delta and b chains.

The protein localises to the cell inner membrane. Key component of the proton channel; it plays a direct role in the translocation of protons across the membrane. The sequence is that of ATP synthase subunit a from Rickettsia bellii (strain RML369-C).